The following is a 56-amino-acid chain: Ovomucoid (56 aa).

Residues Val-6 to Cys-56 enclose the Kazal-like domain. Disulfide bonds link Cys-8–Cys-38, Cys-16–Cys-35, and Cys-24–Cys-56. The N-linked (GlcNAc...) asparagine glycan is linked to Asn-45.

It is found in the secreted. In Callipepla squamata castanogastris (Chestnut bellied scaled quail), this protein is Ovomucoid.